The sequence spans 516 residues: Glutamyl-tRNA(Gln) amidotransferase subunit B, mitochondrial (516 aa).

It belongs to the GatB/GatE family. GatB subfamily. In terms of assembly, subunit of the heterotrimeric GatCAB amidotransferase (AdT) complex, composed of A, B and C subunits.

The protein resides in the mitochondrion. It carries out the reaction L-glutamyl-tRNA(Gln) + L-glutamine + ATP + H2O = L-glutaminyl-tRNA(Gln) + L-glutamate + ADP + phosphate + H(+). Functionally, allows the formation of correctly charged Gln-tRNA(Gln) through the transamidation of misacylated Glu-tRNA(Gln) in the mitochondria. The reaction takes place in the presence of glutamine and ATP through an activated gamma-phospho-Glu-tRNA(Gln). The chain is Glutamyl-tRNA(Gln) amidotransferase subunit B, mitochondrial from Drosophila melanogaster (Fruit fly).